Consider the following 1335-residue polypeptide: Membrane-associated phosphatidylinositol transfer protein 2 (1335 aa).

Disordered stretches follow at residues 32 to 51 (ETHGQGSGVEILENRPYTDG) and 262 to 341 (EEGP…SEEE). Over residues 275–286 (KDQASGTTSDPG) the composition is skewed to polar residues. Residues 299–319 (KQWSTSSKSSRSSKRGASPSR) show a composition bias toward low complexity. Residues Ser-334, Ser-338, Ser-365, and Ser-586 each carry the phosphoserine modification. The interval 606 to 657 (HCSGGSGGGGSGGSSLESSRHLSRSNIDIPRSNGTEDSRRQLPRKRSDSSTY) is disordered. Over residues 609 to 618 (GGSGGGGSGG) the composition is skewed to gly residues. Phosphoserine is present on Ser-630. Over residues 639–653 (GTEDSRRQLPRKRSD) the composition is skewed to basic and acidic residues. 3 positions are modified to phosphoserine: Ser-686, Ser-687, and Ser-688. Residues 701 to 949 (FDFEIADLFL…VSFLLRQVMR (249 aa)) enclose the DDHD domain. Position 814 is an omega-N-methylarginine (Arg-814). Residues 861–880 (ALPPPSPTTQGPRARARQVS) are disordered. A Phosphoserine modification is found at Ser-1263. Residues 1282–1313 (TISAQPSGPSHRHDRTQTQMDSEQRGQRSMSV) are disordered. Residues 1298–1313 (QTQMDSEQRGQRSMSV) are compositionally biased toward polar residues.

The protein belongs to the PtdIns transfer protein family. PI transfer class IIA subfamily. Interacts with CPNE4 (via VWFA domain). Interacts with PTK2B via its C-terminus. As to expression, detected in retina and in the dentate gyrus of the cerebellum.

It is found in the endomembrane system. Its subcellular location is the cytoplasm. The protein resides in the cytoskeleton. In terms of biological role, catalyzes the transfer of phosphatidylinositol and phosphatidylcholine between membranes (in vitro). Binds calcium ions. The protein is Membrane-associated phosphatidylinositol transfer protein 2 (Pitpnm2) of Mus musculus (Mouse).